The following is a 326-amino-acid chain: Eukaryotic translation initiation factor 3 subunit I (326 aa).

WD repeat units lie at residues 8–47 (GHER…RLGT), 50–89 (GHQG…VIAS), 145–184 (MTES…KVVD), 188–227 (DHSA…CLKT), and 285–326 (GHFG…NIFE).

Belongs to the eIF-3 subunit I family. As to quaternary structure, component of the eukaryotic translation initiation factor 3 (eIF-3) complex. The eIF-3 complex interacts with pix.

Its subcellular location is the cytoplasm. Component of the eukaryotic translation initiation factor 3 (eIF-3) complex, which is involved in protein synthesis of a specialized repertoire of mRNAs and, together with other initiation factors, stimulates binding of mRNA and methionyl-tRNAi to the 40S ribosome. The eIF-3 complex specifically targets and initiates translation of a subset of mRNAs involved in cell proliferation. The protein is Eukaryotic translation initiation factor 3 subunit I of Drosophila erecta (Fruit fly).